Here is a 116-residue protein sequence, read N- to C-terminus: uncharacterized protein (116 aa).

This is an uncharacterized protein from Archaeoglobus fulgidus (strain ATCC 49558 / DSM 4304 / JCM 9628 / NBRC 100126 / VC-16).